A 468-amino-acid polypeptide reads, in one-letter code: Mitochondrial adenyl nucleotide antiporter SLC25A23 (468 aa).

The regulatory N-terminal domain stretch occupies residues Met1 to Asn149. Residues Met1–Gln188 are Mitochondrial intermembrane-facing. In terms of domain architecture, EF-hand 1 spans Glu9–Gly44. Positions 22, 24, 26, 28, and 33 each coordinate Ca(2+). The tract at residues Leu34–Asp67 is disordered. Over residues Gly58 to Asp67 the composition is skewed to acidic residues. EF-hand domains are found at residues Glu77–Ser112 and Ile113–Glu148. Ca(2+) contacts are provided by Asp90, Asn92, Asp94, His96, and Glu101. Residues Val150–His159 are linker region. The segment at Ile165–Arg468 is C-terminal transmembrane transporter domain. 3 Solcar repeats span residues Gly183–Ala269, Leu277–Trp362, and Pro374–Ala462. A helical transmembrane segment spans residues Leu189–Leu206. Over Asp207 to Arg243 the chain is Mitochondrial matrix. Residues Gly244–Tyr263 traverse the membrane as a helical segment. Over Glu264–Gly286 the chain is Mitochondrial intermembrane. The chain crosses the membrane as a helical span at residues Ser287–Met300. Topologically, residues Glu301 to Arg336 are mitochondrial matrix. A helical membrane pass occupies residues Gly337 to Tyr356. At Glu357–Leu379 the chain is on the mitochondrial intermembrane side. The helical transmembrane segment at Leu380 to Leu397 threads the bilayer. Topologically, residues Ala398–Arg436 are mitochondrial matrix. The chain crosses the membrane as a helical span at residues Gly437–Tyr456. At Glu457–Arg468 the chain is on the mitochondrial intermembrane side.

The protein belongs to the mitochondrial carrier (TC 2.A.29) family. Interacts with MCU. Interacts with MICU1. Expressed at low levels in most tissues examined, with highest expression in brain, skeletal muscle and pancreas.

The protein resides in the mitochondrion inner membrane. It carries out the reaction Mg(2+)(out) + phosphate(in) + ATP(out) = Mg(2+)(in) + phosphate(out) + ATP(in). The enzyme catalyses ADP(out) + phosphate(in) + H(+)(out) = ADP(in) + phosphate(out) + H(+)(in). The catalysed reaction is AMP(out) + phosphate(in) = AMP(in) + phosphate(out). It catalyses the reaction phosphate(in) + ATP(out) + 2 H(+)(out) = phosphate(out) + ATP(in) + 2 H(+)(in). It carries out the reaction dADP(in) + ADP(out) = dADP(out) + ADP(in). The enzyme catalyses Mg(2+)(in) + ADP(out) + ATP(in) + H(+)(out) = Mg(2+)(out) + ADP(in) + ATP(out) + H(+)(in). The catalysed reaction is ADP(out) + diphosphate(in) = ADP(in) + diphosphate(out). It catalyses the reaction dAMP(in) + ADP(out) + H(+)(out) = dAMP(out) + ADP(in) + H(+)(in). It carries out the reaction 3'-AMP(in) + ADP(out) + H(+)(out) = 3'-AMP(out) + ADP(in) + H(+)(in). The enzyme catalyses dAMP(out) + phosphate(in) = dAMP(in) + phosphate(out). The catalysed reaction is 3'-AMP(out) + phosphate(in) = 3'-AMP(in) + phosphate(out). It catalyses the reaction dADP(out) + phosphate(in) + H(+)(out) = dADP(in) + phosphate(out) + H(+)(in). Its activity is regulated as follows. Activated by an increase in cytosolic calcium levels that induce a conformational change of the N-terminal regulatory domain, uncapping the channel and allowing transport. Inhibited by bathophenanthroline, mersalyl, p-hydroxymercuribenzoate, bromcresol purple, tannic acid, pyridoxal 5'-phosphate and p-hydroxymercuribenzoate. Its function is as follows. Electroneutral antiporter that mediates the transport of adenine nucleotides through the inner mitochondrial membrane. Originally identified as an ATP-magnesium/inorganic phosphate antiporter, it also acts as a broad specificity adenyl nucleotide antiporter. By regulating the mitochondrial matrix adenine nucleotide pool could adapt to changing cellular energetic demands and indirectly regulate adenine nucleotide-dependent metabolic pathways. Also acts as a regulator of mitochondrial calcium uptake and can probably transport trace amounts of other divalent metal cations in complex with ATP. In vitro, a low activity is also observed with guanyl and pyrimidine nucleotides. In Homo sapiens (Human), this protein is Mitochondrial adenyl nucleotide antiporter SLC25A23.